Consider the following 333-residue polypeptide: MEINIREDAFIVEINILKCHGTGNDFILIDEYNNNYNLDDETRRDIAIQACNRAKFIGGDGILFVQKSDICDAKMRIFNADGSEAEMCGNGLRCVGRYVIEMLNKESVEIETLKSKYWVKLQEDIYEGVKTVKIDIKSVSLDVKTLPLNYKKEKLIFDKIPELSDEFDFTAVSITNPHLIAIVNNIDSDKLVEIGKKGNSTKSVLPQGVNVSFVKVIDSSNIYVKTYERGVGLTKSCGTAMTASSIVSCIGEKVQFDNAINVYNDGGAIKTIVHKDSNGNYSVDFIGNATFIFEGTMELDKRKIEQFTIDESKFEKETNSYNEFFEYTRKNCK.

N24 and N79 together coordinate substrate. Residue C88 is the Proton donor of the active site. Residues 89–90, N176, N210, and 228–229 each bind substrate; these read GN and ER. Catalysis depends on C237, which acts as the Proton acceptor. Substrate is bound at residue 238–239; sequence GT.

It belongs to the diaminopimelate epimerase family. Homodimer.

It is found in the cytoplasm. It catalyses the reaction (2S,6S)-2,6-diaminopimelate = meso-2,6-diaminopimelate. It functions in the pathway amino-acid biosynthesis; L-lysine biosynthesis via DAP pathway; DL-2,6-diaminopimelate from LL-2,6-diaminopimelate: step 1/1. In terms of biological role, catalyzes the stereoinversion of LL-2,6-diaminopimelate (L,L-DAP) to meso-diaminopimelate (meso-DAP), a precursor of L-lysine and an essential component of the bacterial peptidoglycan. The protein is Diaminopimelate epimerase of Clostridium acetobutylicum (strain ATCC 824 / DSM 792 / JCM 1419 / IAM 19013 / LMG 5710 / NBRC 13948 / NRRL B-527 / VKM B-1787 / 2291 / W).